We begin with the raw amino-acid sequence, 464 residues long: Kynureninase (464 aa).

Met1 is modified (N-acetylmethionine). Residues Leu137, Thr138, Phe165–Asp168, Ser221, Asp250, His253, and Tyr275 contribute to the pyridoxal 5'-phosphate site. Lys276 carries the N6-(pyridoxal phosphate)lysine modification. Pyridoxal 5'-phosphate-binding residues include Trp305 and Asn333.

It belongs to the kynureninase family. Homodimer. Pyridoxal 5'-phosphate serves as cofactor. High levels in liver and kidney. Also detected in heart, retina, ovary. Lung, testis and brain.

It is found in the cytoplasm. The protein resides in the cytosol. It catalyses the reaction L-kynurenine + H2O = anthranilate + L-alanine + H(+). It carries out the reaction 3-hydroxy-L-kynurenine + H2O = 3-hydroxyanthranilate + L-alanine + H(+). Its pathway is amino-acid degradation; L-kynurenine degradation; L-alanine and anthranilate from L-kynurenine: step 1/1. It participates in cofactor biosynthesis; NAD(+) biosynthesis; quinolinate from L-kynurenine: step 2/3. Inhibited by o-methylbenzoylalanine (OMBA). Catalyzes the cleavage of L-kynurenine (L-Kyn) and L-3-hydroxykynurenine (L-3OHKyn) into anthranilic acid (AA) and 3-hydroxyanthranilic acid (3-OHAA), respectively. Has a preference for the L-3-hydroxy form. Also has cysteine-conjugate-beta-lyase activity. This chain is Kynureninase (Kynu), found in Rattus norvegicus (Rat).